The following is an 887-amino-acid chain: 3-hydroxy-3-methylglutaryl-coenzyme A reductase (887 aa).

The Cytoplasmic segment spans residues 1–9; sequence MLSRLFRMH. Residues 10 to 39 form a helical membrane-spanning segment; the sequence is GLFVASHPWEVIVGTVTLTICMMSMNMFTG. The Lumenal portion of the chain corresponds to 40–56; the sequence is NNKICGWNYECPKFEED. Residues 57 to 78 form a helical membrane-spanning segment; sequence VLSSDIIILTITRCIAILYIYF. Residues 61–218 enclose the SSD domain; that stretch reads DIIILTITRC…MTFFPACVSL (158 aa). An INSIG-binding motif motif is present at residues 75–78; it reads YIYF. The Cytoplasmic segment spans residues 79–89; sequence QFQNLRQLGSK. A Glycyl lysine isopeptide (Lys-Gly) (interchain with G-Cter in ubiquitin) cross-link involves residue Lys89. A helical membrane pass occupies residues 90–114; that stretch reads YILGIAGLFTIFSSFVFSTVVIHFL. Topologically, residues 115–123 are lumenal; it reads DKELTGLNE. A helical membrane pass occupies residues 124–149; the sequence is ALPFFLLLIDLSRASALAKFALSSNS. Topologically, residues 150 to 159 are cytoplasmic; it reads QDEVRENIAR. A helical membrane pass occupies residues 160–187; that stretch reads GMAILGPTFTLDALVECLVIGVGTMSGV. Topologically, residues 188-191 are lumenal; the sequence is RQLE. The helical transmembrane segment at 192–220 threads the bilayer; it reads IMCCFGCMSVLANYFVFMTFFPACVSLVL. Residues 221 to 248 lie on the Cytoplasmic side of the membrane; the sequence is ELSRESREGRPIWQLSHFARVLEEEENK. Lys248 is covalently cross-linked (Glycyl lysine isopeptide (Lys-Gly) (interchain with G-Cter in ubiquitin)). The helical transmembrane segment at 249-275 threads the bilayer; sequence PNPVTQRVKMIMSLGLVLVHAHSRWIA. The Lumenal portion of the chain corresponds to 276–314; the sequence is DPSPQNSTTEHSKVSLGLDEDVSKRIEPSVSLWQFYLSK. N-linked (GlcNAc...) asparagine glycosylation occurs at Asn281. Residues 315 to 339 form a helical membrane-spanning segment; the sequence is MISMDIEQVVTLSLAFLLAVKYIFF. The Cytoplasmic portion of the chain corresponds to 340–887; it reads EQAETESTLS…LQGTCTKKAA (548 aa). Active-site charge relay system residues include Glu558, Lys690, and Asp766. His865 functions as the Proton donor in the catalytic mechanism. Ser871 carries the phosphoserine; by AMPK modification.

It belongs to the HMG-CoA reductase family. As to quaternary structure, homotetramer. Homodimer. Interacts (via its SSD) with INSIG1; the interaction, accelerated by sterols, leads to the recruitment of HMGCR to AMFR/gp78 for its ubiquitination by the sterol-mediated ERAD pathway. Interacts with UBIAD1. Undergoes sterol-mediated ubiquitination and ER-associated degradation (ERAD). Accumulation of sterols in the endoplasmic reticulum (ER) membrane, triggers binding of the reductase to the ER membrane protein INSIG1 or INSIG2. The INSIG1 binding leads to the recruitment of the ubiquitin ligase, AMFR/gp78, RNF139 or RNF145, initiating ubiquitination of the reductase. The ubiquitinated reductase is then extracted from the ER membrane and delivered to cytosolic 26S proteosomes by a mechanism probably mediated by the ATPase Valosin-containing protein VCP/p97. The INSIG2-binding leads to the recruitment of the ubiquitin ligase RNF139, initiating ubiquitination of the reductase. Lys-248 is the main site of ubiquitination. Ubiquitination is enhanced by the presence of a geranylgeranylated protein. In terms of processing, N-glycosylated. Deglycosylated by NGLY1 on release from the endoplasmic reticulum (ER) in a sterol-mediated manner. Post-translationally, phosphorylated. Phosphorylation at Ser-871 reduces the catalytic activity.

It is found in the endoplasmic reticulum membrane. Its subcellular location is the peroxisome membrane. It carries out the reaction (R)-mevalonate + 2 NADP(+) + CoA = (3S)-3-hydroxy-3-methylglutaryl-CoA + 2 NADPH + 2 H(+). It functions in the pathway metabolic intermediate biosynthesis; (R)-mevalonate biosynthesis; (R)-mevalonate from acetyl-CoA: step 3/3. With respect to regulation, regulated by a negative feedback mechanism through sterols and non-sterol metabolites derived from mevalonate. Phosphorylation at Ser-871 down-regulates the catalytic activity. Catalyzes the conversion of (3S)-hydroxy-3-methylglutaryl-CoA (HMG-CoA) to mevalonic acid, the rate-limiting step in the synthesis of cholesterol and other isoprenoids, thus plays a critical role in cellular cholesterol homeostasis. The polypeptide is 3-hydroxy-3-methylglutaryl-coenzyme A reductase (HMGCR) (Mesocricetus auratus (Golden hamster)).